The primary structure comprises 370 residues: Glucan endo-1,3-beta-glucosidase (370 aa).

The N-terminal stretch at 1–32 (MASFFARTRRFSLVSLFLLELFTINLIPTTDA) is a signal peptide. A Pyrrolidone carboxylic acid modification is found at Gln33. Glu127 (proton donor) is an active-site residue. The active-site Nucleophile is Glu272. A propeptide spans 348-370 (GERRDGEIVEGDFNGTVSLKSDM) (removed in mature form). N-linked (GlcNAc...) asparagine glycosylation occurs at Asn361.

It belongs to the glycosyl hydrolase 17 family. Constitutively expressed in seedling roots.

The catalysed reaction is Hydrolysis of (1-&gt;3)-beta-D-glucosidic linkages in (1-&gt;3)-beta-D-glucans.. Its function is as follows. Implicated in the defense of plants against pathogens. The chain is Glucan endo-1,3-beta-glucosidase from Pisum sativum (Garden pea).